Here is a 23-residue protein sequence, read N- to C-terminus: U3-ctenitoxin-Co1a (23 aa).

2 cysteine pairs are disulfide-bonded: Cys2–Cys17 and Cys9–Cys22.

Expressed by the venom gland.

The protein localises to the secreted. Functionally, antagonist of L-type calcium channels (Cav1/CACNA1). The chain is U3-ctenitoxin-Co1a from Ctenus ornatus (Brazilian spider).